Here is a 277-residue protein sequence, read N- to C-terminus: Large ribosomal subunit protein uL2 (277 aa).

Residues 225 to 277 (MNPIDHPHGGGEGKTAAGRHPVSPWGTPSKGFRTRVNKRTDGMIVRRRYSNKG) are disordered.

It belongs to the universal ribosomal protein uL2 family. Part of the 50S ribosomal subunit. Forms a bridge to the 30S subunit in the 70S ribosome.

Its function is as follows. One of the primary rRNA binding proteins. Required for association of the 30S and 50S subunits to form the 70S ribosome, for tRNA binding and peptide bond formation. It has been suggested to have peptidyltransferase activity; this is somewhat controversial. Makes several contacts with the 16S rRNA in the 70S ribosome. The protein is Large ribosomal subunit protein uL2 of Nitrosospira multiformis (strain ATCC 25196 / NCIMB 11849 / C 71).